The following is a 441-amino-acid chain: Maltose-6'-phosphate glucosidase MalH (441 aa).

Residue 4 to 70 (FSVVIAGGGS…PEIEFLATTN (67 aa)) coordinates NAD(+). Substrate contacts are provided by Arg93 and Asn147. A Mn(2+)-binding site is contributed by Cys169. Catalysis depends on Asp170, which acts as the Proton donor. His200 serves as a coordination point for Mn(2+). Residue Tyr264 is the Proton acceptor of the active site. Residue Arg284 participates in substrate binding.

Homotetramer. The cofactor is NAD(+). Requires Mn(2+) as cofactor.

It carries out the reaction alpha-maltose 6'-phosphate + H2O = D-glucose 6-phosphate + D-glucose. In terms of biological role, catalyzes the hydrolysis of O-alpha-linked disaccharide 6-phosphates, including maltose-6'P and all five phosphorylated isomers of sucrose, but not sucrose-6P. Does not hydrolyze beta-linked disaccharide 6-phosphates such as cellobiose-6'P and gentiobiose-6'P. Is involved in the dissimilation of maltose and related O-alpha-linked glucosides produced via the phosphoenolpyruvate-dependent sugar phosphotransferase system (PEP-PTS). The sequence is that of Maltose-6'-phosphate glucosidase MalH (malH) from Clostridium acetobutylicum (strain ATCC 824 / DSM 792 / JCM 1419 / IAM 19013 / LMG 5710 / NBRC 13948 / NRRL B-527 / VKM B-1787 / 2291 / W).